The primary structure comprises 639 residues: Mediator of RNA polymerase II transcription subunit 17 (639 aa).

The stretch at 160-187 (RLQNFNAAADKLLKSASRLENEVASETR) forms a coiled coil.

It belongs to the Mediator complex subunit 17 family. As to quaternary structure, component of the Mediator complex.

It localises to the nucleus. Its function is as follows. Component of the Mediator complex, a coactivator involved in the regulated transcription of nearly all RNA polymerase II-dependent genes. Mediator functions as a bridge to convey information from gene-specific regulatory proteins to the basal RNA polymerase II transcription machinery. Mediator is recruited to promoters by direct interactions with regulatory proteins and serves as a scaffold for the assembly of a functional preinitiation complex with RNA polymerase II and the general transcription factors. The chain is Mediator of RNA polymerase II transcription subunit 17 (srb4) from Neosartorya fischeri (strain ATCC 1020 / DSM 3700 / CBS 544.65 / FGSC A1164 / JCM 1740 / NRRL 181 / WB 181) (Aspergillus fischerianus).